The primary structure comprises 407 residues: Phospholipid-transporting ATPase accessory subunit CDC50 (407 aa).

Residues Met1–Phe33 form a disordered region. The Cytoplasmic segment spans residues Met1–Lys48. Positions Asp15–Lys25 are enriched in basic and acidic residues. A helical membrane pass occupies residues Leu49 to Thr69. Residues Tyr70 to Gly359 lie on the Extracellular side of the membrane. Cys85 and Cys139 are disulfide-bonded. Residues Asn131 and Asn189 are each glycosylated (N-linked (GlcNAc...) asparagine). A disulfide bond links Cys193 and Cys210. 4 N-linked (GlcNAc...) asparagine glycosylation sites follow: Asn219, Asn232, Asn241, and Asn314. Residues Ile360–Phe380 form a helical membrane-spanning segment. Residues Phe381–Ser407 lie on the Cytoplasmic side of the membrane.

This sequence belongs to the CDC50/LEM3 family. In terms of assembly, component of a flippase complex consisting of DNF1 and CDC50. Interacts with DNF1; the interaction is direct.

It is found in the cell membrane. Its function is as follows. Accessory component of a P4-ATPase flippase complex which catalyzes the hydrolysis of ATP coupled to the transport of phosphatidylcholine and phosphatidylserine from the lumen to the cytosolic leaflet of membranes and ensures the maintenance of asymmetric distribution of phospholipids. The protein is Phospholipid-transporting ATPase accessory subunit CDC50 of Chaetomium thermophilum (strain DSM 1495 / CBS 144.50 / IMI 039719) (Thermochaetoides thermophila).